Reading from the N-terminus, the 919-residue chain is MLX-interacting protein (919 aa).

The tract at residues 1–72 (MAADVFMCSP…AGPGREEPPR (72 aa)) is disordered. The residue at position 2 (alanine 2) is an N-acetylalanine. Residues serine 9, serine 27, serine 33, and serine 39 each carry the phosphoserine modification. A compositionally biased stretch (acidic residues) spans 27-37 (SEDDDDSDTDE). A compositionally biased stretch (low complexity) spans 44–56 (SGAATPARAHASA). Residues 73–327 (RQQIIHSGHF…PLQPNLDFMD (255 aa)) form a required for cytoplasmic localization region. The transactivation domain stretch occupies residues 322–445 (NLDFMDTFEP…LLSPSPAPPP (124 aa)). Disordered stretches follow at residues 542–562 (KPVS…PAPK) and 633–712 (DLGH…SDPK). At serine 669 the chain carries Phosphoserine. Polar residues predominate over residues 670-685 (PQVTVTGPSRDCPNSG). A compositionally biased stretch (low complexity) spans 686–706 (QASPCASEQSPSPQSPQNNCS). A bHLH domain is found at 719 to 769 (NRQMKHISAEQKRRFNIKMCFDMLNSLISNNSKLTSHAITLQKTVEYITKL). The interval 769–790 (LQQERGQMQEEARRLREEIEEL) is leucine-zipper. Residues 832-881 (WKFWIFSIIIKPLFESFKGMVSTSSLEELHRTALSWLDQHCSLPILRPMV) form a mediates heterotypic interactions between MLXIP and MLX and is required for cytoplasmic localization region.

Efficient DNA binding requires dimerization with another bHLH protein. Binds DNA as a homodimer or a heterodimer with MLX. Widely expressed in adult tissues. Most abundant in skeletal muscle.

The protein resides in the cytoplasm. The protein localises to the nucleus. It is found in the mitochondrion outer membrane. Binds DNA as a heterodimer with MLX and activates transcription. Binds to the canonical E box sequence 5'-CACGTG-3'. Plays a role in transcriptional activation of glycolytic target genes. Involved in glucose-responsive gene regulation. The sequence is that of MLX-interacting protein from Homo sapiens (Human).